A 994-amino-acid chain; its full sequence is Sarcoplasmic/endoplasmic reticulum calcium ATPase 1 (994 aa).

Over 1-48 (MEQAHTKTTEECLAYFGVNENTGLSLDQVKKNFDKFGPNELPAEEGKS) the chain is Cytoplasmic. Residues 49-69 (LWELVAEQFEDLLVRILLLAA) form a helical membrane-spanning segment. At 70-89 (IISFVLAWFEEGEETVTAFV) the chain is on the lumenal side. A helical transmembrane segment spans residues 90-110 (EPFVILLILIANAVVGVWQER). At 111–253 (NAEDAIEALK…QEKTPLQQKL (143 aa)) the chain is on the cytoplasmic side. The chain crosses the membrane as a helical span at residues 254-273 (DEFGEQLSKVISLICVAVWL). Over 274-295 (INIGHFNDPIHGGSWIKGAIYY) the chain is Lumenal. A helical transmembrane segment spans residues 296-313 (FKIAVALAVAAIPEGLPA). Ca(2+) is bound by residues V304, A305, I307, and E309. The Cytoplasmic portion of the chain corresponds to 314 to 757 (VITTCLALGT…EEGRAIYNNM (444 aa)). D351 serves as the catalytic 4-aspartylphosphate intermediate. Mg(2+) is bound by residues D351 and T353. T353, E442, R489, K515, R560, T625, G626, D627, R678, and K684 together coordinate ATP. D703 provides a ligand contact to Mg(2+). N706 is a binding site for ATP. A helical transmembrane segment spans residues 758 to 777 (KQFIRYLISSNVGEVVCIFL). The Ca(2+) site is built by N768 and E771. At 778–787 (TAALGLPEAL) the chain is on the lumenal side. A helical membrane pass occupies residues 788 to 808 (IPVQLLWVNLVTDGLPATALG). The interaction with PLN stretch occupies residues 788–808 (IPVQLLWVNLVTDGLPATALG). Residues N796, T799, and D800 each contribute to the Ca(2+) site. Residues 809–828 (FNPPDLDIMDRPPRSPKEPL) lie on the Cytoplasmic side of the membrane. The chain crosses the membrane as a helical span at residues 829–851 (ISGWLFFRYMAIGGYVGAATVGA). At 852-897 (AAWWFMYADDGPNVTFYQLSHFMQCTEDNPDFEGHECEIFESPVPM) the chain is on the lumenal side. An intrachain disulfide couples C876 to C888. Residues 898–917 (TMALSVLVTIEMCNALNSLS) form a helical membrane-spanning segment. Residue E908 coordinates Ca(2+). The Cytoplasmic portion of the chain corresponds to 918-930 (ENQSLIRMPPWSN). A helical membrane pass occupies residues 931–949 (FWLLGSICLSMSLHFLILY). The interaction with PLN stretch occupies residues 932–943 (WLLGSICLSMSL). At 950 to 964 (VEPLPMIFKLTPLNV) the chain is on the lumenal side. The helical transmembrane segment at 965–985 (EQWFIVLKMSFPVILLDELLK) threads the bilayer. Topologically, residues 986–994 (FVARNYLEG) are cytoplasmic.

It belongs to the cation transport ATPase (P-type) (TC 3.A.3) family. Type IIA subfamily. Interacts with sarcolipin (SLN). Interacts with phospholamban (PLN). Interacts with myoregulin (MRLN). Interacts with DWORF. Interacts with VMP1. Mg(2+) is required as a cofactor.

Its subcellular location is the endoplasmic reticulum membrane. It is found in the sarcoplasmic reticulum membrane. It catalyses the reaction Ca(2+)(in) + ATP + H2O = Ca(2+)(out) + ADP + phosphate + H(+). Its activity is regulated as follows. Inhibited by sarcolipin (SLN) and myoregulin (MRLN). Also shown to be inhibited by phospholamban (PLN) in vitro. Enhanced by DWORF; DWORF increases activity by displacing sarcolipin (SLN), phospholamban (PLN) and myoregulin (MRLN). Its function is as follows. Key regulator of striated muscle performance by acting as the major Ca(2+) ATPase responsible for the reuptake of cytosolic Ca(2+) into the sarcoplasmic reticulum. Catalyzes the hydrolysis of ATP coupled with the translocation of calcium from the cytosol to the sarcoplasmic reticulum lumen. Contributes to calcium sequestration involved in muscular excitation/contraction. The protein is Sarcoplasmic/endoplasmic reticulum calcium ATPase 1 (ATP2A1) of Pelophylax lessonae (Pool frog).